Consider the following 314-residue polypeptide: Acetaldehyde dehydrogenase 3 (314 aa).

Catalysis depends on cysteine 132, which acts as the Acyl-thioester intermediate. Residues 163–171 and asparagine 291 contribute to the NAD(+) site; that span reads SAGPGTRAN.

This sequence belongs to the acetaldehyde dehydrogenase family.

The catalysed reaction is acetaldehyde + NAD(+) + CoA = acetyl-CoA + NADH + H(+). This Dechloromonas aromatica (strain RCB) protein is Acetaldehyde dehydrogenase 3.